Consider the following 105-residue polypeptide: Large ribosomal subunit protein bL21 (105 aa).

Belongs to the bacterial ribosomal protein bL21 family. Part of the 50S ribosomal subunit. Contacts protein L20.

In terms of biological role, this protein binds to 23S rRNA in the presence of protein L20. In Frankia casuarinae (strain DSM 45818 / CECT 9043 / HFP020203 / CcI3), this protein is Large ribosomal subunit protein bL21.